The primary structure comprises 536 residues: Probable tyrosyl-DNA phosphodiesterase (536 aa).

His122 (nucleophile) is an active-site residue. Residue Lys124 coordinates substrate. The interaction with DNA stretch occupies residues 315–318 (SMGS). The Proton donor/acceptor role is filled by His401. Lys403 lines the substrate pocket.

Belongs to the tyrosyl-DNA phosphodiesterase family.

It localises to the nucleus. In terms of biological role, DNA repair enzyme that can remove a variety of covalent adducts from DNA through hydrolysis of a 3'-phosphodiester bond, giving rise to DNA with a free 3' phosphate. Catalyzes the hydrolysis of dead-end complexes between DNA and the topoisomerase I active site tyrosine residue. Hydrolyzes 3'-phosphoglycolates on protruding 3' ends on DNA double-strand breaks due to DNA damage by radiation and free radicals. Acts on blunt-ended double-strand DNA breaks and on single-stranded DNA. May have low 3'exonuclease activity and may be able to remove a single nucleoside from the 3'end of DNA and RNA molecules with 3'hydroxyl groups. Has no exonuclease activity towards DNA or RNA with a 3'phosphate. The chain is Probable tyrosyl-DNA phosphodiesterase from Schizosaccharomyces pombe (strain 972 / ATCC 24843) (Fission yeast).